The sequence spans 472 residues: 3-isopropylmalate dehydratase large subunit (472 aa).

The [4Fe-4S] cluster site is built by cysteine 347, cysteine 407, and cysteine 410.

This sequence belongs to the aconitase/IPM isomerase family. LeuC type 1 subfamily. As to quaternary structure, heterodimer of LeuC and LeuD. [4Fe-4S] cluster serves as cofactor.

The catalysed reaction is (2R,3S)-3-isopropylmalate = (2S)-2-isopropylmalate. It participates in amino-acid biosynthesis; L-leucine biosynthesis; L-leucine from 3-methyl-2-oxobutanoate: step 2/4. Its function is as follows. Catalyzes the isomerization between 2-isopropylmalate and 3-isopropylmalate, via the formation of 2-isopropylmaleate. The chain is 3-isopropylmalate dehydratase large subunit from Bacillus velezensis (strain DSM 23117 / BGSC 10A6 / LMG 26770 / FZB42) (Bacillus amyloliquefaciens subsp. plantarum).